Here is a 108-residue protein sequence, read N- to C-terminus: Nucleoid-associated protein CHAB381_0200 (108 aa).

This sequence belongs to the YbaB/EbfC family. In terms of assembly, homodimer.

The protein localises to the cytoplasm. It localises to the nucleoid. In terms of biological role, binds to DNA and alters its conformation. May be involved in regulation of gene expression, nucleoid organization and DNA protection. The chain is Nucleoid-associated protein CHAB381_0200 from Campylobacter hominis (strain ATCC BAA-381 / DSM 21671 / CCUG 45161 / LMG 19568 / NCTC 13146 / CH001A).